The chain runs to 474 residues: Sensor protein CreC (474 aa).

Residues methionine 1–arginine 6 lie on the Periplasmic side of the membrane. The helical transmembrane segment at leucine 7–valine 27 threads the bilayer. At lysine 28–serine 146 the chain is on the cytoplasmic side. Residues valine 147 to glycine 167 traverse the membrane as a helical segment. The Periplasmic portion of the chain corresponds to lysine 168–arginine 183. A helical membrane pass occupies residues isoleucine 184 to tryptophan 204. Positions tryptophan 205 to tyrosine 255 constitute an HAMP domain. At tryptophan 205–threonine 474 the chain is on the cytoplasmic side. In terms of domain architecture, Histidine kinase spans alanine 262 to phenylalanine 473. Residue histidine 265 is modified to Phosphohistidine; by autocatalysis.

Post-translationally, autophosphorylated.

The protein localises to the cell inner membrane. It carries out the reaction ATP + protein L-histidine = ADP + protein N-phospho-L-histidine.. Its function is as follows. Member of the two-component regulatory system CreC/CreB involved in catabolic regulation. CreC may function as a membrane-associated protein kinase that phosphorylates CreB in response to environmental signals. CreC can also phosphorylate PhoB. The chain is Sensor protein CreC (creC) from Escherichia coli (strain K12).